The chain runs to 591 residues: Fidgetin-like protein 1 (591 aa).

2 disordered regions span residues 1–117 (MYSP…KSSL) and 223–249 (GQEPQKSKFQIPLDRQSSSQSNHSQPI). Residues 17 to 26 (KRPETEENRG) show a composition bias toward basic and acidic residues. Over residues 76–93 (DDDPESIVIDEDDEEDEP) the composition is skewed to acidic residues. Over residues 237 to 249 (RQSSSQSNHSQPI) the composition is skewed to polar residues. ATP contacts are provided by residues A319 and 359–364 (GTGKTM).

Belongs to the AAA ATPase family. In terms of assembly, hexamer. Mg(2+) serves as cofactor.

It localises to the nucleus. The catalysed reaction is ATP + H2O = ADP + phosphate + H(+). Its function is as follows. Has a role in spindle assembly which acts in the progression through mitosis during embryogenesis. Required for fertility. The protein is Fidgetin-like protein 1 (figl-1) of Caenorhabditis briggsae.